Reading from the N-terminus, the 99-residue chain is UPF0045 protein MTH_1187 (99 aa).

This sequence belongs to the UPF0045 family. In terms of assembly, homotetramer.

The chain is UPF0045 protein MTH_1187 from Methanothermobacter thermautotrophicus (strain ATCC 29096 / DSM 1053 / JCM 10044 / NBRC 100330 / Delta H) (Methanobacterium thermoautotrophicum).